A 1624-amino-acid polypeptide reads, in one-letter code: Putative serine/threonine-protein kinase/receptor R831 (1624 aa).

The first 25 residues, 1 to 25 (MHSVYTKYTIILILLVIYQGLPTNT), serve as a signal peptide directing secretion. N-linked (GlcNAc...) asparagine; by host glycosylation is found at N152, N169, N200, N205, N225, N240, N245, N292, N364, N479, N541, N720, and N737. A helical transmembrane segment spans residues 747–767 (VIPIACIFGLLLLTLLIVIIF). In terms of domain architecture, Protein kinase 1 spans 786-1049 (LEIGETLGTG…EIMTRLSNIL (264 aa)). ATP contacts are provided by residues 792–800 (LGTGGYGEV) and K813. The active-site Proton acceptor is the D908. A compositionally biased stretch (low complexity) spans 1054 to 1093 (NMTSGTSSSSLSSGGIGKSITDSKSSNSRSSVESSNTSNT). Residues 1054 to 1101 (NMTSGTSSSSLSSGGIGKSITDSKSSNSRSSVESSNTSNTFRGIDRHN) form a disordered region. One can recognise a Guanylate cyclase domain in the interval 1109 to 1252 (TVAFIDIISA…STVNITGKIT (144 aa)). Residues 1364–1615 (ISIGKQIGLG…MTEVVQQLML (252 aa)) enclose the Protein kinase 2 domain. ATP contacts are provided by residues 1370 to 1378 (IGLGSYGIV) and K1391. D1487 functions as the Proton acceptor in the catalytic mechanism.

The protein resides in the membrane. The catalysed reaction is L-seryl-[protein] + ATP = O-phospho-L-seryl-[protein] + ADP + H(+). It carries out the reaction L-threonyl-[protein] + ATP = O-phospho-L-threonyl-[protein] + ADP + H(+). The chain is Putative serine/threonine-protein kinase/receptor R831 from Acanthamoeba polyphaga (Amoeba).